The sequence spans 212 residues: MKAFTRLTGLVCPLDRANVDTDAIIPKQFLKSIQRSGFGPNLFDEWRYLDHGEPGMDNSIRPQNPDFVLNFPRYQGAQILLARENFGCGSSREHAPWALDDYGFRVVIAPSFADIFFNNCYKNGLLPIVLPAEVMDRLFAGCEASEGYRLTVDLAAQTVTTPQGDSFGFDITEHRKHCLLNGLDEIGLTLRHAGEIKAFEDNRRQTQPWLFR.

Belongs to the LeuD family. LeuD type 1 subfamily. In terms of assembly, heterodimer of LeuC and LeuD.

It catalyses the reaction (2R,3S)-3-isopropylmalate = (2S)-2-isopropylmalate. Its pathway is amino-acid biosynthesis; L-leucine biosynthesis; L-leucine from 3-methyl-2-oxobutanoate: step 2/4. In terms of biological role, catalyzes the isomerization between 2-isopropylmalate and 3-isopropylmalate, via the formation of 2-isopropylmaleate. The chain is 3-isopropylmalate dehydratase small subunit from Laribacter hongkongensis (strain HLHK9).